The chain runs to 183 residues: ATP synthase subunit delta (183 aa).

Belongs to the ATPase delta chain family. F-type ATPases have 2 components, F(1) - the catalytic core - and F(0) - the membrane proton channel. F(1) has five subunits: alpha(3), beta(3), gamma(1), delta(1), epsilon(1). F(0) has three main subunits: a(1), b(2) and c(10-14). The alpha and beta chains form an alternating ring which encloses part of the gamma chain. F(1) is attached to F(0) by a central stalk formed by the gamma and epsilon chains, while a peripheral stalk is formed by the delta and b chains.

It localises to the cell inner membrane. Its function is as follows. F(1)F(0) ATP synthase produces ATP from ADP in the presence of a proton or sodium gradient. F-type ATPases consist of two structural domains, F(1) containing the extramembraneous catalytic core and F(0) containing the membrane proton channel, linked together by a central stalk and a peripheral stalk. During catalysis, ATP synthesis in the catalytic domain of F(1) is coupled via a rotary mechanism of the central stalk subunits to proton translocation. In terms of biological role, this protein is part of the stalk that links CF(0) to CF(1). It either transmits conformational changes from CF(0) to CF(1) or is implicated in proton conduction. The polypeptide is ATP synthase subunit delta (Syntrophobacter fumaroxidans (strain DSM 10017 / MPOB)).